The following is a 435-amino-acid chain: Ras association domain-containing protein 9 (435 aa).

The interval 1-22 (MAPFGRNLLKTRHKNRSPTKDM) is disordered. The region spanning 25-119 (EEKEIVVWVC…MQFVLVKADA (95 aa)) is the Ras-associating domain. A coiled-coil region spans residues 195–290 (HTIHQQVKRM…DKLSAEIEKE (96 aa)). Positions 380–435 (NRAKESEVPSSNGEIPPFTQRVFSNYTNDTDSDTGISSNHSQDSETTVGDVVLLST) are disordered. The segment covering 400–426 (RVFSNYTNDTDSDTGISSNHSQDSETT) has biased composition (polar residues).

In terms of assembly, interacts with PAM.

The protein localises to the endosome. Its function is as follows. May play a role in regulating vesicuar trafficking in cells. The sequence is that of Ras association domain-containing protein 9 (RASSF9) from Homo sapiens (Human).